A 287-amino-acid polypeptide reads, in one-letter code: uncharacterized protein (287 aa).

It belongs to the AllH family.

This is an uncharacterized protein from Escherichia coli (strain K12).